Here is a 449-residue protein sequence, read N- to C-terminus: GTP-binding protein A (449 aa).

A disordered region spans residues 1–77; sequence MFNINPYKSK…LSSKTENSLS (77 aa). 2 stretches are compositionally biased toward low complexity: residues 8–46 and 67–77; these read KSKT…SSSS and SLSSKTENSLS. An AIG1-type G domain is found at 149–386; sequence QNECNVLLLG…FMGHLRAKNK (238 aa). Positions 158-165 are G1; sequence GRTGVGKS. 158-165 is a GTP binding site; sequence GRTGVGKS. Positions 183–187 are G2; that stretch reads SCTQD. The tract at residues 204-207 is G3; sequence DTPG. The G4 stretch occupies residues 275–278; that stretch reads TYAN. The segment at 336–338 is G5; sequence ENS.

Belongs to the TRAFAC class TrmE-Era-EngA-EngB-Septin-like GTPase superfamily. AIG1/Toc34/Toc159-like paraseptin GTPase family. IAN subfamily.

In Dictyostelium discoideum (Social amoeba), this protein is GTP-binding protein A (gtpA).